An 865-amino-acid chain; its full sequence is Fatty acyl-CoA synthetase and RNA processing-associated kinase 1 (865 aa).

One can recognise a Protein kinase domain in the interval 41–313 (YILGSTLGEG…LKQIKKHEWL (273 aa)). Residues 47–55 (LGEGEFGKV) and Lys-80 each bind ATP. The Proton acceptor role is filled by Asp-175. Residues 341–398 (KPRRRYGSRPQSSCSTSSLGSRSDKRDSLVIDSTLITFPAPPQESQNHIITRPASIAS) form a disordered region. Over residues 352–361 (SSCSTSSLGS) the composition is skewed to low complexity. Ser-441 carries the post-translational modification Phosphoserine. Disordered regions lie at residues 480 to 554 (ISGS…YTTP), 673 to 733 (TEES…LNEA), and 754 to 782 (SLYSSMDSKRKPSPPSQRRPKKDDSYQTN). Residues 494-538 (STTMQTSKIQPNNMASSQNHQYNKNKTQNSLQSAKNFYRTSSSSH) are compositionally biased toward polar residues. Composition is skewed to basic and acidic residues over residues 690-708 (EGQESIDKAKTEDTSEKGS) and 724-733 (NHLERSLNEA).

The protein belongs to the protein kinase superfamily. Ser/Thr protein kinase family. In terms of assembly, interacts with FAA3, POL5 and TPA1.

It localises to the cytoplasm. It catalyses the reaction L-seryl-[protein] + ATP = O-phospho-L-seryl-[protein] + ADP + H(+). It carries out the reaction L-threonyl-[protein] + ATP = O-phospho-L-threonyl-[protein] + ADP + H(+). Its function is as follows. Putative serine/threonine-protein kinase that may be involved in rRNA transcription and ribosome biogenesis. The polypeptide is Fatty acyl-CoA synthetase and RNA processing-associated kinase 1 (FRK1) (Saccharomyces cerevisiae (strain ATCC 204508 / S288c) (Baker's yeast)).